The sequence spans 218 residues: Monomethylamine corrinoid protein 1 (218 aa).

The region spanning 1-91 (MANQEIFDKL…ELEKTKVEGE (91 aa)) is the B12-binding N-terminal domain. A B12-binding domain is found at 94–218 (TGLAITFVAE…AAKVALNIMK (125 aa)). His107 provides a ligand contact to methylcob(III)alamin.

This sequence belongs to the methylamine corrinoid protein family. Can form a complex with MtmB.

The protein operates within one-carbon metabolism; methanogenesis from methylamine. Functionally, acts as a methyl group carrier between MtmB and MtbA. This Methanosarcina acetivorans (strain ATCC 35395 / DSM 2834 / JCM 12185 / C2A) protein is Monomethylamine corrinoid protein 1 (mtmC1).